A 115-amino-acid chain; its full sequence is Large ribosomal subunit protein bL19 (115 aa).

Belongs to the bacterial ribosomal protein bL19 family.

In terms of biological role, this protein is located at the 30S-50S ribosomal subunit interface and may play a role in the structure and function of the aminoacyl-tRNA binding site. The sequence is that of Large ribosomal subunit protein bL19 from Finegoldia magna (strain ATCC 29328 / DSM 20472 / WAL 2508) (Peptostreptococcus magnus).